A 416-amino-acid chain; its full sequence is Adenylosuccinate synthetase (416 aa).

GTP-binding positions include 13 to 19 and 41 to 43; these read GDEGKGK and GHT. Asp14 serves as the catalytic Proton acceptor. The Mg(2+) site is built by Asp14 and Gly41. Residues 14–17, 39–42, Thr126, Arg140, Gln220, Thr235, and Arg299 contribute to the IMP site; these read DEGK and NAGH. His42 acts as the Proton donor in catalysis. Substrate is bound at residue 295 to 301; that stretch reads VSTGRKR. GTP-binding positions include Arg301, 327-329, and 405-407; these read KLD and STS.

The protein belongs to the adenylosuccinate synthetase family. In terms of assembly, homodimer. Mg(2+) is required as a cofactor.

Its subcellular location is the cytoplasm. The catalysed reaction is IMP + L-aspartate + GTP = N(6)-(1,2-dicarboxyethyl)-AMP + GDP + phosphate + 2 H(+). Its pathway is purine metabolism; AMP biosynthesis via de novo pathway; AMP from IMP: step 1/2. In terms of biological role, plays an important role in the de novo pathway of purine nucleotide biosynthesis. Catalyzes the first committed step in the biosynthesis of AMP from IMP. This Campylobacter lari (strain RM2100 / D67 / ATCC BAA-1060) protein is Adenylosuccinate synthetase.